The sequence spans 73 residues: Large ribosomal subunit protein uL30 (73 aa).

The protein belongs to the universal ribosomal protein uL30 family. As to quaternary structure, part of the 50S ribosomal subunit.

In Borreliella afzelii (strain PKo) (Borrelia afzelii), this protein is Large ribosomal subunit protein uL30.